Consider the following 540-residue polypeptide: ADP,ATP carrier protein 2 (540 aa).

12 consecutive transmembrane segments (helical) span residues 23–43 (FSKF…YALL), 61–81 (VIPF…TMIY), 93–113 (VFIS…TVIY), 150–170 (LYYV…FWGV), 185–205 (ALIN…SLWL), 222–242 (EVLL…LYLY), 292–312 (LLGI…FEVV), 334–354 (ITTL…GQTI), 361–381 (IGAL…FGAI), 389–409 (MIFG…LGGV), 455–475 (SGGS…AASL), and 477–497 (AITI…AWLG).

Belongs to the ADP/ATP translocase tlc family.

Its subcellular location is the cell membrane. In Chlamydia trachomatis serovar D (strain ATCC VR-885 / DSM 19411 / UW-3/Cx), this protein is ADP,ATP carrier protein 2 (tlcB).